The sequence spans 312 residues: GATA transcription factor 6 (312 aa).

3 disordered regions span residues 1 to 33 (MESV…VDDL), 56 to 77 (QRKR…STAD), and 136 to 186 (KSQH…PLWL). Over residues 56–71 (QRKRGVSDENTLHRSN) the composition is skewed to basic and acidic residues. Residues 142–151 (VKTRPKRART) show a composition bias toward basic residues. The short motif at 143 to 150 (KTRPKRAR) is the Nuclear localization signal element. Over residues 157–186 (SHGSQSLTDSSSSSTTSSSSSPRPSSPLWL) the composition is skewed to low complexity. The GATA-type zinc-finger motif lies at 217 to 271 (QTQTRQCGHCGVQKTPQWRAGPLGAKTLCNACGVRYKSGRLLPEYRPACSPTFSS).

It belongs to the type IV zinc-finger family. Class A subfamily.

The protein localises to the nucleus. In terms of biological role, transcriptional activator that specifically binds 5'-GATA-3' or 5'-GAT-3' motifs within gene promoters. May be involved in the regulation of some light-responsive genes. The polypeptide is GATA transcription factor 6 (GATA6) (Arabidopsis thaliana (Mouse-ear cress)).